Here is a 212-residue protein sequence, read N- to C-terminus: Probable chemoreceptor glutamine deamidase CheD (212 aa).

The protein belongs to the CheD family.

It carries out the reaction L-glutaminyl-[protein] + H2O = L-glutamyl-[protein] + NH4(+). In terms of biological role, probably deamidates glutamine residues to glutamate on methyl-accepting chemotaxis receptors (MCPs), playing an important role in chemotaxis. The protein is Probable chemoreceptor glutamine deamidase CheD of Oleidesulfovibrio alaskensis (strain ATCC BAA-1058 / DSM 17464 / G20) (Desulfovibrio alaskensis).